The sequence spans 196 residues: Gastrula zinc finger protein XlCGF8.2DB (196 aa).

C2H2-type zinc fingers lie at residues 6 to 28 (FTCK…MTIH), 34 to 56 (FSCT…LTIH), 62 to 84 (FPCT…MKIH), 90 to 112 (FTCT…LKIH), 118 to 140 (FSCT…MKIH), 146 to 168 (FTCT…LKMH), and 174 to 196 (FTCT…MKIH).

This sequence belongs to the krueppel C2H2-type zinc-finger protein family.

It localises to the nucleus. Its function is as follows. May be involved in transcriptional regulation. In Xenopus laevis (African clawed frog), this protein is Gastrula zinc finger protein XlCGF8.2DB.